The following is a 225-amino-acid chain: Jeltraxin (225 aa).

The N-terminal stretch at 1–19 is a signal peptide; that stretch reads MKGLVIFFCLFYGCHVAGA. Positions 21 to 223 constitute a Pentraxin (PTX) domain; sequence GKTIMLFPQK…IVVLRNQFIP (203 aa). An intrachain disulfide couples C51 to C112. The Ca(2+) site is built by D75 and N76. An N-linked (GlcNAc...) asparagine glycan is attached at N87. Ca(2+)-binding residues include E153, Q154, D155, and Q165. N207 carries an N-linked (GlcNAc...) asparagine glycan.

Homodecamer consisting of two homopentamer units. Pentraxin (or pentaxin) have a discoid arrangement of 5 non-covalently bound subunits. Ca(2+) serves as cofactor. In terms of processing, glycosylated. Oviduct. Highest expression levels were detected in the pars convoluta with lower levels detected in the pars recta. No expression was detected in the pars uterina.

Its subcellular location is the secreted. Its function is as follows. Calcium-dependent beta-galactose specific lectin. This Lepidobatrachus laevis (Budgett's frog) protein is Jeltraxin.